A 334-amino-acid polypeptide reads, in one-letter code: Probable aminoacyl tRNA synthase complex-interacting multifunctional protein 2 (334 aa).

A GST C-terminal domain is found at 280 to 327 (LDKRLQKQQYFGGSQMSVADVGVYSSLIRMPAVTEKDLTPALVAWRKR).

In terms of assembly, component of the aminoacyl-tRNA synthase complex which is comprised of a bifunctional glutamyl-prolyl-tRNA synthase, the monospecific isoleucyl, leucyl, glutaminyl, methionyl, lysyl, arginyl and aspartyl-tRNA synthases, and three auxiliary proteins.

The protein resides in the cytoplasm. It localises to the cytosol. The protein localises to the nucleus. Required for assembly and stability of the aminoacyl-tRNA synthase complex. The chain is Probable aminoacyl tRNA synthase complex-interacting multifunctional protein 2 from Drosophila melanogaster (Fruit fly).